A 346-amino-acid polypeptide reads, in one-letter code: Endosome-associated-trafficking regulator 1 (346 aa).

Over residues 46-67 (FVSSNSKRAFSKDSNQSTTQFR) the composition is skewed to polar residues. Disordered stretches follow at residues 46–77 (FVSS…DGNL), 93–129 (LQED…GDES), and 153–173 (SPPA…SDSE). Residues 170 to 317 (SDSEEGLRLL…SGAQSSIKQL (148 aa)) are a coiled coil.

This sequence belongs to the ENTR1 family.

Its subcellular location is the cytoplasm. The protein localises to the early endosome. It localises to the endosome. It is found in the recycling endosome. The protein resides in the midbody. Its subcellular location is the cytoskeleton. The protein localises to the microtubule organizing center. It localises to the centrosome. It is found in the cilium basal body. Functionally, endosome-associated protein that plays a role in membrane receptor sorting, cytokinesis and ciliogenesis. This is Endosome-associated-trafficking regulator 1 from Xenopus tropicalis (Western clawed frog).